We begin with the raw amino-acid sequence, 805 residues long: DNA gyrase subunit B (805 aa).

One can recognise a Toprim domain in the interval 435 to 550 (SEIFIVEGDS…RGYIYIAQPP (116 aa)). Glutamate 441, aspartate 515, and aspartate 517 together coordinate Mg(2+).

The protein belongs to the type II topoisomerase GyrB family. In terms of assembly, heterotetramer, composed of two GyrA and two GyrB chains. In the heterotetramer, GyrA contains the active site tyrosine that forms a transient covalent intermediate with DNA, while GyrB binds cofactors and catalyzes ATP hydrolysis. It depends on Mg(2+) as a cofactor. Mn(2+) is required as a cofactor. The cofactor is Ca(2+).

Its subcellular location is the cytoplasm. It catalyses the reaction ATP-dependent breakage, passage and rejoining of double-stranded DNA.. Its function is as follows. A type II topoisomerase that negatively supercoils closed circular double-stranded (ds) DNA in an ATP-dependent manner to modulate DNA topology and maintain chromosomes in an underwound state. Negative supercoiling favors strand separation, and DNA replication, transcription, recombination and repair, all of which involve strand separation. Also able to catalyze the interconversion of other topological isomers of dsDNA rings, including catenanes and knotted rings. Type II topoisomerases break and join 2 DNA strands simultaneously in an ATP-dependent manner. The sequence is that of DNA gyrase subunit B from Caulobacter vibrioides (strain ATCC 19089 / CIP 103742 / CB 15) (Caulobacter crescentus).